A 450-amino-acid polypeptide reads, in one-letter code: Glucose-6-phosphate isomerase (450 aa).

Glutamate 291 (proton donor) is an active-site residue. Active-site residues include histidine 312 and lysine 426.

Belongs to the GPI family.

The protein localises to the cytoplasm. It catalyses the reaction alpha-D-glucose 6-phosphate = beta-D-fructose 6-phosphate. Its pathway is carbohydrate biosynthesis; gluconeogenesis. It functions in the pathway carbohydrate degradation; glycolysis; D-glyceraldehyde 3-phosphate and glycerone phosphate from D-glucose: step 2/4. Catalyzes the reversible isomerization of glucose-6-phosphate to fructose-6-phosphate. The polypeptide is Glucose-6-phosphate isomerase (Clostridium novyi (strain NT)).